We begin with the raw amino-acid sequence, 167 residues long: Novel acetylcholine receptor chaperone (167 aa).

Over 1-5 (MASPR) the chain is Cytoplasmic. The helical transmembrane segment at 6 to 26 (TITIMALSVALGLFFVFMGTI) threads the bilayer. At 27 to 61 (KLTPRLSKDAYSEMKRAYKSYVRALPLLKKMGINS) the chain is on the lumenal side. Residues 43–54 (AYKSYVRALPLL) are interaction with NGFR. Residues 62 to 82 (ILLRKSIGALEVACGIVMTLV) traverse the membrane as a helical segment. Residues 83–88 (PGRPKD) lie on the Cytoplasmic side of the membrane. Residues 89-109 (VANFFLLLLVLAVLFFHQLVG) traverse the membrane as a helical segment. The Lumenal portion of the chain corresponds to 110-114 (DPLKR). The chain crosses the membrane as a helical span at residues 115-132 (YAHALVFGILLTCRLLIA). Topologically, residues 133 to 167 (RKPEDRSSEKKALPESAEEQPSLYEKAPQGKVKVS) are cytoplasmic. Residues 135–145 (PEDRSSEKKAL) show a composition bias toward basic and acidic residues. The disordered stretch occupies residues 135-167 (PEDRSSEKKALPESAEEQPSLYEKAPQGKVKVS).

Belongs to the DoxX family. As to quaternary structure, may interact with NGFR. Interacts with RPN1, RPN2 and CANX. Brain (at protein level). Expressed in the spinal cord dorsal horn (at protein level).

It is found in the peroxisome membrane. The protein resides in the cytoplasmic vesicle. Its subcellular location is the endoplasmic reticulum membrane. Molecular chaperone which mediates the proper assembly and functional expression of the nicotinic acetylcholine receptors (nAChRs) throughout the brain. Essential for the proper folding, assembly, function and surface trafficking of alpha-7 (CHRNA7), alpha-4-beta-2, alpha-3-beta-2 and alpha-3-beta-4 receptors. Stably associates with ribophorin-1 (RPN1) and ribophorin-2 (RPN2) (components of the oligosaccharyl transferase (OST) complex) and with calnexin (CANX), both of which are critical for NACHO-mediated effects on CHRNA7 assembly and function. Facilitates the proper folding and assembly of alpha-6-beta-2 and alpha-6-beta-2-beta-3 receptors and acts at early stages of the nAChRs subunit assembly. Promotes the expression of the alpha-4(2):beta-2(3) stoichiometric form over the alpha-4(3):beta-2(2) form. This Mus musculus (Mouse) protein is Novel acetylcholine receptor chaperone.